Consider the following 286-residue polypeptide: Phosphatidylserine decarboxylase proenzyme (286 aa).

Catalysis depends on charge relay system; for autoendoproteolytic cleavage activity residues Asp-90, His-147, and Ser-252. Catalysis depends on Ser-252, which acts as the Schiff-base intermediate with substrate; via pyruvic acid; for decarboxylase activity. Residue Ser-252 is modified to Pyruvic acid (Ser); by autocatalysis.

This sequence belongs to the phosphatidylserine decarboxylase family. PSD-B subfamily. Prokaryotic type I sub-subfamily. Heterodimer of a large membrane-associated beta subunit and a small pyruvoyl-containing alpha subunit. Pyruvate serves as cofactor. Post-translationally, is synthesized initially as an inactive proenzyme. Formation of the active enzyme involves a self-maturation process in which the active site pyruvoyl group is generated from an internal serine residue via an autocatalytic post-translational modification. Two non-identical subunits are generated from the proenzyme in this reaction, and the pyruvate is formed at the N-terminus of the alpha chain, which is derived from the carboxyl end of the proenzyme. The autoendoproteolytic cleavage occurs by a canonical serine protease mechanism, in which the side chain hydroxyl group of the serine supplies its oxygen atom to form the C-terminus of the beta chain, while the remainder of the serine residue undergoes an oxidative deamination to produce ammonia and the pyruvoyl prosthetic group on the alpha chain. During this reaction, the Ser that is part of the protease active site of the proenzyme becomes the pyruvoyl prosthetic group, which constitutes an essential element of the active site of the mature decarboxylase.

It is found in the cell membrane. The catalysed reaction is a 1,2-diacyl-sn-glycero-3-phospho-L-serine + H(+) = a 1,2-diacyl-sn-glycero-3-phosphoethanolamine + CO2. The protein operates within phospholipid metabolism; phosphatidylethanolamine biosynthesis; phosphatidylethanolamine from CDP-diacylglycerol: step 2/2. Its function is as follows. Catalyzes the formation of phosphatidylethanolamine (PtdEtn) from phosphatidylserine (PtdSer). The chain is Phosphatidylserine decarboxylase proenzyme from Pseudomonas fluorescens (strain Pf0-1).